Consider the following 294-residue polypeptide: 4-hydroxy-tetrahydrodipicolinate synthase (294 aa).

Thr-45 provides a ligand contact to pyruvate. Tyr-133 acts as the Proton donor/acceptor in catalysis. Lys-161 acts as the Schiff-base intermediate with substrate in catalysis. Ile-203 serves as a coordination point for pyruvate.

The protein belongs to the DapA family. In terms of assembly, homotetramer; dimer of dimers.

It is found in the cytoplasm. The catalysed reaction is L-aspartate 4-semialdehyde + pyruvate = (2S,4S)-4-hydroxy-2,3,4,5-tetrahydrodipicolinate + H2O + H(+). The protein operates within amino-acid biosynthesis; L-lysine biosynthesis via DAP pathway; (S)-tetrahydrodipicolinate from L-aspartate: step 3/4. Its function is as follows. Catalyzes the condensation of (S)-aspartate-beta-semialdehyde [(S)-ASA] and pyruvate to 4-hydroxy-tetrahydrodipicolinate (HTPA). This Shewanella sp. (strain ANA-3) protein is 4-hydroxy-tetrahydrodipicolinate synthase.